Here is a 65-residue protein sequence, read N- to C-terminus: Orally active insecticidal peptide-3 (65 aa).

The first 21 residues, 1 to 21 (MKTSVLFAILGLALLFCLSFG), serve as a signal peptide directing secretion. Positions 22–29 (VELEETGR) are excised as a propeptide. Intrachain disulfides connect Cys-31-Cys-46, Cys-38-Cys-51, and Cys-45-Cys-58. Pro-62 is modified (proline amide).

It belongs to the neurotoxin 10 (Hwtx-1) family. 46 (Jztx-7/10/12) subfamily. Expressed by the venom gland.

It localises to the secreted. Probable ion channel inhibitor. Shows insecticidal activity when injected into mealworms. This is Orally active insecticidal peptide-3 from Selenotypus plumipes (Australian featherleg tarantula).